We begin with the raw amino-acid sequence, 254 residues long: Pimeloyl-[acyl-carrier protein] methyl ester esterase (254 aa).

Positions 14-242 constitute an AB hydrolase-1 domain; it reads LVLLHGWGMN…ASHAPFISHP (229 aa). Substrate contacts are provided by residues W20, 82-83, and 143-147; these read SL and FLAIQ. The active-site Nucleophile is S82. Active-site residues include D207 and H235. Substrate is bound at residue H235.

It belongs to the AB hydrolase superfamily. Carboxylesterase BioH family. Monomer.

The protein resides in the cytoplasm. It catalyses the reaction 6-carboxyhexanoyl-[ACP] methyl ester + H2O = 6-carboxyhexanoyl-[ACP] + methanol + H(+). The protein operates within cofactor biosynthesis; biotin biosynthesis. Its function is as follows. The physiological role of BioH is to remove the methyl group introduced by BioC when the pimeloyl moiety is complete. It allows to synthesize pimeloyl-ACP via the fatty acid synthetic pathway through the hydrolysis of the ester bonds of pimeloyl-ACP esters. This chain is Pimeloyl-[acyl-carrier protein] methyl ester esterase, found in Aeromonas salmonicida (strain A449).